Reading from the N-terminus, the 196-residue chain is Nucleoid occlusion factor SlmA (196 aa).

In terms of domain architecture, HTH tetR-type spans 7–68; it reads PNRRDEILQA…GLIEFIEESI (62 aa). The segment at residues 31-50 is a DNA-binding region (H-T-H motif); that stretch reads TTAKLAKQVGVSEAALYRHF. Positions 71–93 form a coiled coil; that stretch reads RVNRILEDEKDTLKRIELLLKLL.

This sequence belongs to the nucleoid occlusion factor SlmA family. In terms of assembly, homodimer. Interacts with FtsZ.

The protein resides in the cytoplasm. Its subcellular location is the nucleoid. Functionally, required for nucleoid occlusion (NO) phenomenon, which prevents Z-ring formation and cell division over the nucleoid. Acts as a DNA-associated cell division inhibitor that binds simultaneously chromosomal DNA and FtsZ, and disrupts the assembly of FtsZ polymers. SlmA-DNA-binding sequences (SBS) are dispersed on non-Ter regions of the chromosome, preventing FtsZ polymerization at these regions. This chain is Nucleoid occlusion factor SlmA, found in Aliivibrio fischeri (strain MJ11) (Vibrio fischeri).